Consider the following 108-residue polypeptide: UPF0060 membrane protein YnfA (108 aa).

At 1 to 5 (MLKTT) the chain is on the periplasmic side. The chain crosses the membrane as a helical span at residues 6-26 (LLFFVTALCEIIGCFLTWLWI). Topologically, residues 27 to 30 (KRGA) are cytoplasmic. The chain crosses the membrane as a helical span at residues 31–51 (SVWWLLPAAASLALFVWLLTL). Residues 52–60 (HPAASGRVY) lie on the Periplasmic side of the membrane. A helical membrane pass occupies residues 61–81 (AAYGGVYVCTALLWLRVVDGV). Residues 82–84 (RLT) lie on the Cytoplasmic side of the membrane. A helical transmembrane segment spans residues 85-105 (VYDWCGAPIALCGMLIIVVGW). Residues 106 to 108 (GRT) are Periplasmic-facing.

It belongs to the UPF0060 family.

Its subcellular location is the cell inner membrane. This is UPF0060 membrane protein YnfA from Salmonella dublin (strain CT_02021853).